The following is a 240-amino-acid chain: PF03932 family protein CutC (240 aa).

It belongs to the CutC family.

It localises to the cytoplasm. The polypeptide is PF03932 family protein CutC (Xanthomonas campestris pv. campestris (strain B100)).